We begin with the raw amino-acid sequence, 832 residues long: Disintegrin and metalloproteinase domain-containing protein 23 (832 aa).

Positions 1 to 10 are enriched in polar residues; it reads MKPPGSSSRQ. Residues 1-37 are disordered; sequence MKPPGSSSRQPPLAGCSLAGASCGPQRGPAGSVPASA. Positions 1 to 59 are cleaved as a signal peptide; it reads MKPPGSSSRQPPLAGCSLAGASCGPQRGPAGSVPASAPARTPPCRLLLVLLLLPPLAAS. Positions 28–37 are enriched in low complexity; that stretch reads GPAGSVPASA. Positions 60–286 are excised as a propeptide; that stretch reads SRPRAWGAAA…ELQWLKRRKR (227 aa). N-linked (GlcNAc...) asparagine glycans are attached at residues N76, N96, N100, and N263. The Extracellular portion of the chain corresponds to 287–792; sequence AVNPSRGIFE…EGPKGPSATN (506 aa). A Peptidase M12B domain is found at 299–496; it reads KYLELMIVND…GGGACLFNRP (198 aa). Intrachain disulfides connect C408-C491, C450-C475, and C452-C459. Positions 502-588 constitute a Disintegrin domain; that stretch reads PTECGNGYVE…QCPPNLHKQD (87 aa). Residues N547 and N548 are each glycosylated (N-linked (GlcNAc...) asparagine). A disulfide bridge connects residues C560 and C580. The tract at residues 563–568 is may bind the integrin receptor; it reads AVNECD. N-linked (GlcNAc...) asparagine glycans are attached at residues N664 and N732. Residues 732–769 form the EGF-like domain; sequence NMSSCPLDSKGKVCSGHGVCSNEATCICDFTWAGTDCS. 3 disulfides stabilise this stretch: C736/C751, C745/C757, and C759/C768. Residues 793–813 form a helical membrane-spanning segment; that stretch reads LIIGSIAGAILVAAIVLGGTG. At 814–832 the chain is on the cytoplasmic side; sequence WGFKNVKKRRFDPTQQGPI.

In terms of assembly, can bind to LGI1 and LGI4. Ligand for integrin alpha-V/beta-3. Highly expressed in the brain and weakly expressed in the heart. In the brain, expressed prominently in the amygdala, caudate nucleus, hypothalamus, thalamus, cerebral cortex and occipital pole.

The protein localises to the cell membrane. It localises to the secreted. May play a role in cell-cell and cell-matrix interactions. This is a non-catalytic metalloprotease-like protein. The polypeptide is Disintegrin and metalloproteinase domain-containing protein 23 (ADAM23) (Homo sapiens (Human)).